The sequence spans 473 residues: Ribulose bisphosphate carboxylase large chain (473 aa).

A propeptide spanning residues 1-2 (MS) is cleaved from the precursor. P3 is modified (N-acetylproline). K14 bears the N6,N6,N6-trimethyllysine mark. The substrate site is built by N123 and T173. Catalysis depends on K175, which acts as the Proton acceptor. K177 is a binding site for substrate. The Mg(2+) site is built by K201, D203, and E204. K201 is modified (N6-carboxylysine). Residue H294 is the Proton acceptor of the active site. Substrate is bound by residues R295, H327, and S379.

Belongs to the RuBisCO large chain family. Type I subfamily. Heterohexadecamer of 8 large chains and 8 small chains; disulfide-linked. The disulfide link is formed within the large subunit homodimers. The cofactor is Mg(2+). Post-translationally, the disulfide bond which can form in the large chain dimeric partners within the hexadecamer appears to be associated with oxidative stress and protein turnover.

It is found in the plastid. The protein resides in the chloroplast. It carries out the reaction 2 (2R)-3-phosphoglycerate + 2 H(+) = D-ribulose 1,5-bisphosphate + CO2 + H2O. It catalyses the reaction D-ribulose 1,5-bisphosphate + O2 = 2-phosphoglycolate + (2R)-3-phosphoglycerate + 2 H(+). Its function is as follows. RuBisCO catalyzes two reactions: the carboxylation of D-ribulose 1,5-bisphosphate, the primary event in carbon dioxide fixation, as well as the oxidative fragmentation of the pentose substrate in the photorespiration process. Both reactions occur simultaneously and in competition at the same active site. The sequence is that of Ribulose bisphosphate carboxylase large chain from Cajanus cajan (Pigeon pea).